Here is a 388-residue protein sequence, read N- to C-terminus: Chorismate synthase (388 aa).

NADP(+) is bound by residues Arg-39 and Arg-45. Residues 130–132 (RSS), 251–252 (NA), Gly-296, 311–315 (KPIPT), and Arg-337 each bind FMN.

Belongs to the chorismate synthase family. As to quaternary structure, homotetramer. The cofactor is FMNH2.

The enzyme catalyses 5-O-(1-carboxyvinyl)-3-phosphoshikimate = chorismate + phosphate. It functions in the pathway metabolic intermediate biosynthesis; chorismate biosynthesis; chorismate from D-erythrose 4-phosphate and phosphoenolpyruvate: step 7/7. Catalyzes the anti-1,4-elimination of the C-3 phosphate and the C-6 proR hydrogen from 5-enolpyruvylshikimate-3-phosphate (EPSP) to yield chorismate, which is the branch point compound that serves as the starting substrate for the three terminal pathways of aromatic amino acid biosynthesis. This reaction introduces a second double bond into the aromatic ring system. The polypeptide is Chorismate synthase (Streptococcus pyogenes serotype M12 (strain MGAS2096)).